The sequence spans 56 residues: Large ribosomal subunit protein bL33 (56 aa).

The protein belongs to the bacterial ribosomal protein bL33 family.

The polypeptide is Large ribosomal subunit protein bL33 (Vibrio campbellii (strain ATCC BAA-1116)).